Reading from the N-terminus, the 887-residue chain is Probable dual specificity protein kinase madd-3 (887 aa).

5 disordered regions span residues 77–147 (PIKS…ISAA), 163–299 (AQPP…PKAL), 313–333 (LPQS…STGG), 347–475 (TTIC…KSAA), and 504–533 (RKPS…QHQD). Over residues 108-118 (PTQNPVQLPLP) the composition is skewed to low complexity. The span at 121 to 130 (VSEKPGDKKS) shows a compositional bias: basic and acidic residues. Residues 177–192 (SETNSGSGPVSKQVSG) show a composition bias toward polar residues. The span at 217–241 (SSASTRAKAASAVAPEANPAPVPTA) shows a compositional bias: low complexity. 2 stretches are compositionally biased toward polar residues: residues 314–332 (PQSS…TSTG) and 356–366 (NVPSTSQPQQG). Residues 367-377 (DNEKRLIEKKL) are compositionally biased toward basic and acidic residues. Residues 407–419 (LSSNLTTTNNNNN) are compositionally biased toward low complexity. A compositionally biased stretch (polar residues) spans 439–462 (FSTQAGSGNATTVDDPASTTTSKE). The region spanning 551 to 863 (FTIYDTLGEG…LPEALQHRYF (313 aa)) is the Protein kinase domain. ATP contacts are provided by residues 557–565 (LGEGTFGKV) and K580. The active-site Proton acceptor is the D677.

Belongs to the protein kinase superfamily. CMGC Ser/Thr protein kinase family. Lammer subfamily. As to expression, expressed in body wall, vulval and anal depressor muscles.

The protein localises to the cytoplasm. It localises to the nucleus. Its function is as follows. Probable dual specificity kinase acting on both serine/threonine and tyrosine-containing substrates. Negatively regulates p38 MAPK signaling to allow for the plasma membrane of body wall muscle cells to form projections, also called muscle arms, that extend and connect the body wall muscles to target motor neurons. Negative regulation of p38 MAPK signaling may in turn modulate the trafficking of the muscle specific receptor eva-1 to the lysosome, to ensure proper display of the eva-1 receptor on the plasma membrane of muscle cells and allow for muscle arm extension towards guidance cues. This chain is Probable dual specificity protein kinase madd-3, found in Caenorhabditis elegans.